A 192-amino-acid chain; its full sequence is Small ribosomal subunit protein eS7 (192 aa).

It belongs to the eukaryotic ribosomal protein eS7 family.

The protein is Small ribosomal subunit protein eS7 (RpS7) of Culex quinquefasciatus (Southern house mosquito).